Consider the following 438-residue polypeptide: Aspartate--tRNA(Asp/Asn) ligase (438 aa).

Glutamate 176 is a binding site for L-aspartate. The segment at 198–201 (QLYK) is aspartate. Arginine 220 is a binding site for L-aspartate. ATP contacts are provided by residues 220–222 (RAE), 228–230 (RHL), and glutamate 361. Mg(2+) contacts are provided by glutamate 361 and serine 364. L-aspartate contacts are provided by serine 364 and arginine 368. 409-412 (GADR) serves as a coordination point for ATP.

Belongs to the class-II aminoacyl-tRNA synthetase family. Type 2 subfamily. In terms of assembly, homodimer. Mg(2+) is required as a cofactor.

Its subcellular location is the cytoplasm. The catalysed reaction is tRNA(Asx) + L-aspartate + ATP = L-aspartyl-tRNA(Asx) + AMP + diphosphate. Functionally, aspartyl-tRNA synthetase with relaxed tRNA specificity since it is able to aspartylate not only its cognate tRNA(Asp) but also tRNA(Asn). Reaction proceeds in two steps: L-aspartate is first activated by ATP to form Asp-AMP and then transferred to the acceptor end of tRNA(Asp/Asn). The sequence is that of Aspartate--tRNA(Asp/Asn) ligase from Methanococcus maripaludis (strain C5 / ATCC BAA-1333).